The chain runs to 219 residues: MTKGILGKKVGMTQVFTDNGELVPVTVIDVTPNVVMQIKTVENDGYSAVQLGFDDKREVLSNKPEQGHAAKANTTPKRFIGEIRDAELGDIKVGDEVKADVFAEGETVDVTGTTKGHGYQGNIHKDNQSRGPMAHGSRYHRRPGSLGAIINRVFKGMKLPGRMGGKTVTMQHLQVVKVDLDNNVLLIKGNVPGANKSYVTIKNSVKANTKKSLSKQHNK.

The segment at 113 to 142 is disordered; sequence TTKGHGYQGNIHKDNQSRGPMAHGSRYHRR.

Belongs to the universal ribosomal protein uL3 family. As to quaternary structure, part of the 50S ribosomal subunit. Forms a cluster with proteins L14 and L19.

Functionally, one of the primary rRNA binding proteins, it binds directly near the 3'-end of the 23S rRNA, where it nucleates assembly of the 50S subunit. This Limosilactobacillus reuteri (strain DSM 20016) (Lactobacillus reuteri) protein is Large ribosomal subunit protein uL3.